A 211-amino-acid polypeptide reads, in one-letter code: MADESGDAAGCPPPAPAPIRRQSSANYRAYATEPHAKKKSKISASRKLQLKTLMLQIAKQELEREAEERRGEKGRALSTRCQPLELAGLGFAELQDLCRQLHARVDKVDEERYDVEAKVTKNITEIADLTQKIFDLRGKFKRPTLRRVRISADAMMQALLGTRAKESLDLRAHLKQVKKEDTEKENREVGDWRKNIDALSGMEGRKKKFEG.

Residues 1–23 (MADESGDAAGCPPPAPAPIRRQS) form a disordered region. A2 carries the N-acetylalanine modification. S5 bears the Phosphoserine mark. S23 and S24 each carry phosphoserine; by PKA and PKD/PRKD1. Phosphotyrosine is present on Y27. T32 is subject to Phosphothreonine; by STK4/MST1. Residues 33–80 (EPHAKKKSKISASRKLQLKTLMLQIAKQELEREAEERRGEKGRALSTR) are involved in binding TNC. S43 and S45 each carry phosphoserine; by PKC/PRKCE. T52 is subject to Phosphothreonine; by STK4/MST1. S78 bears the Phosphoserine mark. Position 79 is a phosphothreonine (T79). Phosphothreonine; by STK4/MST1 is present on residues T130 and T144. An involved in binding TNC and actin region spans residues 130-150 (TQKIFDLRGKFKRPTLRRVRI). The residue at position 151 (S151) is a Phosphoserine; by PAK3. Position 167 is a phosphoserine (S167). Residue T182 is modified to Phosphothreonine. S200 bears the Phosphoserine mark.

Belongs to the troponin I family. As to quaternary structure, binds to actin and tropomyosin. Interacts with TRIM63. Interacts with STK4/MST1. In terms of processing, phosphorylated at Ser-23 and Ser-24 by PRKD1; phosphorylation reduces myofilament calcium sensitivity. Phosphorylated preferentially at Thr-32. Phosphorylation by STK4/MST1 alters its binding affinity to TNNC1 (cardiac Tn-C) and TNNT2 (cardiac Tn-T). Phosphorylated at Ser-43 and Ser-45 by PRKCE; phosphorylation increases myocardium contractile dysfunction.

Troponin I is the inhibitory subunit of troponin, the thin filament regulatory complex which confers calcium-sensitivity to striated muscle actomyosin ATPase activity. This chain is Troponin I, cardiac muscle (TNNI3), found in Canis lupus familiaris (Dog).